The following is a 93-amino-acid chain: Small ribosomal subunit protein uS19 (93 aa).

It belongs to the universal ribosomal protein uS19 family.

Protein S19 forms a complex with S13 that binds strongly to the 16S ribosomal RNA. The polypeptide is Small ribosomal subunit protein uS19 (Citrifermentans bemidjiense (strain ATCC BAA-1014 / DSM 16622 / JCM 12645 / Bem) (Geobacter bemidjiensis)).